The chain runs to 465 residues: UDP-N-acetylmuramate--L-alanine ligase (465 aa).

Residue 112–118 (GTHGKTT) coordinates ATP.

Belongs to the MurCDEF family.

It localises to the cytoplasm. It catalyses the reaction UDP-N-acetyl-alpha-D-muramate + L-alanine + ATP = UDP-N-acetyl-alpha-D-muramoyl-L-alanine + ADP + phosphate + H(+). It functions in the pathway cell wall biogenesis; peptidoglycan biosynthesis. Its function is as follows. Cell wall formation. This Burkholderia cenocepacia (strain ATCC BAA-245 / DSM 16553 / LMG 16656 / NCTC 13227 / J2315 / CF5610) (Burkholderia cepacia (strain J2315)) protein is UDP-N-acetylmuramate--L-alanine ligase.